The chain runs to 359 residues: Phosphate acyltransferase (359 aa).

The protein belongs to the PlsX family. Homodimer. Probably interacts with PlsY.

Its subcellular location is the cytoplasm. It carries out the reaction a fatty acyl-[ACP] + phosphate = an acyl phosphate + holo-[ACP]. Its pathway is lipid metabolism; phospholipid metabolism. In terms of biological role, catalyzes the reversible formation of acyl-phosphate (acyl-PO(4)) from acyl-[acyl-carrier-protein] (acyl-ACP). This enzyme utilizes acyl-ACP as fatty acyl donor, but not acyl-CoA. The chain is Phosphate acyltransferase from Koribacter versatilis (strain Ellin345).